A 384-amino-acid chain; its full sequence is Sphingosine 1-phosphate receptor 4 (384 aa).

The Extracellular segment spans residues 1 to 50 (MNATGTPVAPESCQQLAAGGHSRLIVLHYNHSGRLAGRGGPEDGGLGALR). N-linked (GlcNAc...) asparagine glycosylation is found at N2 and N30. A helical membrane pass occupies residues 51-71 (GLSVAASCLVVLENLLVLAAI). At 72-84 (TSHMRSRRWVYYC) the chain is on the cytoplasmic side. Residues 85–105 (LVNITLSDLLTGAAYLANVLL) form a helical membrane-spanning segment. The Extracellular portion of the chain corresponds to 106-117 (SGARTFRLAPAQ). Residues 118 to 138 (WFLREGLLFTALAASTFSLLF) form a helical membrane-spanning segment. Residues 139 to 161 (TAGERFATMVRPVAESGATKTSR) lie on the Cytoplasmic side of the membrane. Residues 162–182 (VYGFIGLCWLLAALLGMLPLL) traverse the membrane as a helical segment. The Extracellular segment spans residues 183 to 206 (GWNCLCAFDRCSSLLPLYSKRYIL). Residues 207–227 (FCLVIFAGVLATIMGLYGAIF) traverse the membrane as a helical segment. Over 228-252 (RLVQASGQKAPRPAARRKARRLLKT) the chain is Cytoplasmic. Residues 253–273 (VLMILLAFLVCWGPLFGLLLA) traverse the membrane as a helical segment. Residues 274-288 (DVFGSNLWAQEYLRG) lie on the Extracellular side of the membrane. A helical membrane pass occupies residues 289-309 (MDWILALAVLNSAVNPIIYSF). The Cytoplasmic segment spans residues 310–384 (RSREVCRAVL…LSSISSVRSI (75 aa)). Residue C323 is the site of S-palmitoyl cysteine attachment.

This sequence belongs to the G-protein coupled receptor 1 family. As to expression, specifically expressed in fetal and adult lymphoid and hematopoietic tissue as well as in lung. Considerable level of expression in adult and fetal spleen as well as adult peripheral leukocytes and lung. Lower expression in adult thymus, lymph node, bone marrow, and appendix as well as in fetal liver, thymus, and lung.

It localises to the cell membrane. Functionally, receptor for the lysosphingolipid sphingosine 1-phosphate (S1P). S1P is a bioactive lysophospholipid that elicits diverse physiological effect on most types of cells and tissues. May be involved in cell migration processes that are specific for lymphocytes. In Homo sapiens (Human), this protein is Sphingosine 1-phosphate receptor 4 (S1PR4).